A 790-amino-acid chain; its full sequence is Spermatogenesis-associated protein 20 (790 aa).

Over residues 1–19 (MSHHSSPPPKHKGEHKGHG) the composition is skewed to basic residues. Positions 1-67 (MSHHSSPPPK…PPPAPPKTVN (67 aa)) are disordered. Serine 5 carries the phosphoserine modification. Over residues 23–36 (GSERGSSSRDKDRS) the composition is skewed to basic and acidic residues. Position 653 is a phosphoserine (serine 653).

The protein resides in the secreted. Functionally, may play a role in fertility regulation. The sequence is that of Spermatogenesis-associated protein 20 (Spata20) from Mus musculus (Mouse).